A 356-amino-acid polypeptide reads, in one-letter code: Histidinol-phosphate aminotransferase (356 aa).

Residue lysine 214 is modified to N6-(pyridoxal phosphate)lysine.

The protein belongs to the class-II pyridoxal-phosphate-dependent aminotransferase family. Histidinol-phosphate aminotransferase subfamily. As to quaternary structure, homodimer. Requires pyridoxal 5'-phosphate as cofactor.

It catalyses the reaction L-histidinol phosphate + 2-oxoglutarate = 3-(imidazol-4-yl)-2-oxopropyl phosphate + L-glutamate. Its pathway is amino-acid biosynthesis; L-histidine biosynthesis; L-histidine from 5-phospho-alpha-D-ribose 1-diphosphate: step 7/9. This Escherichia coli O127:H6 (strain E2348/69 / EPEC) protein is Histidinol-phosphate aminotransferase.